A 471-amino-acid polypeptide reads, in one-letter code: MPRTIIEKIWDQHVVKSGEGKPDLLYIDLHLVHEVTSPQAFEGLRQKGRKVRRPQNTFATMDHNIPTVNRFVIKDEIAKKQVGALERNCAEFGVRLADLHSVDQGIVHVVGPELGLTLPGKTIVCGDSHTSTHGAFGALAFGIGTSEVEHVLSTQTLWQQRPKTLEIRVDGKLQKGVTAKDVILAVIGAHGVKFGSGYVIEYTGEVFRNMTMDERMTVCNMSIEAGARAGLIAPDEVTFEYCRGRKYAPQGEDFEAAIKEWEELKTDPGATYDKTIVLDGNEISPMVTWGINPGMVLPVDASIPGPEDFAQEDDQKEAIRAYEYMGVHPHQRIEDITIEHVFIGSCTNSRMTDLRQAASMIEGQKVADHVRAIVVPGSQSVKLQAEEEGLHKIFLEAGFEWRESGCSMCLSMNNDVVPEGERCASTSNRNFEGRQGKGARTHLVSPAMAAMAAIHGRFVDVRKFNQEKTVV.

3 residues coordinate [4Fe-4S] cluster: cysteine 346, cysteine 406, and cysteine 409.

It belongs to the aconitase/IPM isomerase family. LeuC type 1 subfamily. As to quaternary structure, heterodimer of LeuC and LeuD. It depends on [4Fe-4S] cluster as a cofactor.

It carries out the reaction (2R,3S)-3-isopropylmalate = (2S)-2-isopropylmalate. It functions in the pathway amino-acid biosynthesis; L-leucine biosynthesis; L-leucine from 3-methyl-2-oxobutanoate: step 2/4. Functionally, catalyzes the isomerization between 2-isopropylmalate and 3-isopropylmalate, via the formation of 2-isopropylmaleate. This Bacillus pumilus (strain SAFR-032) protein is 3-isopropylmalate dehydratase large subunit.